Here is a 54-residue protein sequence, read N- to C-terminus: Ovomucoid (54 aa).

The 51-residue stretch at 4–54 (VDCSEHPKPACTLEDRPLCGSDNKIYSNKCDFCNAVLESNGTLTLSHFGKC) folds into the Kazal-like domain. 3 disulfide bridges follow: Cys-6-Cys-36, Cys-14-Cys-33, and Cys-22-Cys-54. Asn-43 carries N-linked (GlcNAc...) asparagine glycosylation.

It is found in the secreted. The sequence is that of Ovomucoid from Argusianus argus (Great argus).